The chain runs to 531 residues: Arginine--tRNA ligase (531 aa).

The short motif at 113–123 (ANPTGPLHIGH) is the 'HIGH' region element.

This sequence belongs to the class-I aminoacyl-tRNA synthetase family. In terms of assembly, monomer.

The protein localises to the cytoplasm. It carries out the reaction tRNA(Arg) + L-arginine + ATP = L-arginyl-tRNA(Arg) + AMP + diphosphate. The sequence is that of Arginine--tRNA ligase from Campylobacter fetus subsp. fetus (strain 82-40).